The chain runs to 732 residues: DNA ligase (732 aa).

NAD(+)-binding positions include 47 to 51, 96 to 97, and glutamate 133; these read DAEYD and SI. Lysine 135 (N6-AMP-lysine intermediate) is an active-site residue. Residues arginine 156, glutamate 196, lysine 317, and lysine 341 each coordinate NAD(+). Zn(2+)-binding residues include cysteine 470, cysteine 473, cysteine 488, and cysteine 494. Residues 653–732 form the BRCT domain; sequence RATLPLAGKT…AGMLALLQGR (80 aa).

Belongs to the NAD-dependent DNA ligase family. LigA subfamily. It depends on Mg(2+) as a cofactor. Mn(2+) serves as cofactor.

The catalysed reaction is NAD(+) + (deoxyribonucleotide)n-3'-hydroxyl + 5'-phospho-(deoxyribonucleotide)m = (deoxyribonucleotide)n+m + AMP + beta-nicotinamide D-nucleotide.. In terms of biological role, DNA ligase that catalyzes the formation of phosphodiester linkages between 5'-phosphoryl and 3'-hydroxyl groups in double-stranded DNA using NAD as a coenzyme and as the energy source for the reaction. It is essential for DNA replication and repair of damaged DNA. The sequence is that of DNA ligase from Paracidovorax citrulli (strain AAC00-1) (Acidovorax citrulli).